The sequence spans 692 residues: Elongation factor G (692 aa).

The tr-type G domain maps to 8 to 283 (QDLRNIGIVA…AVVDYLPSPL (276 aa)). Residues 17–24 (AHIDAGKT), 81–85 (DTPGH), and 135–138 (NKLD) contribute to the GTP site.

This sequence belongs to the TRAFAC class translation factor GTPase superfamily. Classic translation factor GTPase family. EF-G/EF-2 subfamily.

It localises to the cytoplasm. In terms of biological role, catalyzes the GTP-dependent ribosomal translocation step during translation elongation. During this step, the ribosome changes from the pre-translocational (PRE) to the post-translocational (POST) state as the newly formed A-site-bound peptidyl-tRNA and P-site-bound deacylated tRNA move to the P and E sites, respectively. Catalyzes the coordinated movement of the two tRNA molecules, the mRNA and conformational changes in the ribosome. The chain is Elongation factor G from Hydrogenobaculum sp. (strain Y04AAS1).